Reading from the N-terminus, the 91-residue chain is Sm-like protein LSM6A (91 aa).

Positions 14 to 86 (TPADFLKSIR…VLYISTVNMT (73 aa)) constitute a Sm domain.

It belongs to the snRNP Sm proteins family. As to quaternary structure, component of the heptameric LSM1-LSM7 complex that forms a seven-membered ring structure with a donut shape. The LSM subunits are arranged in the order LSM1, LSM2, LSM3, LSM6, LSM5, LSM7 and LSM4. Component of the heptameric LSM2-LSM8 complex that forms a seven-membered ring structure with a donut shape. The LSM subunits are arranged in the order LSM8, LSM2, LSM3, LSM6, LSM5, LSM7 and LSM4. LSM6A subunit interacts only with its two neighboring subunits, LSM3A or LSM3B and LSM5. In terms of tissue distribution, expressed in roots, leaves, stems, flowers and siliques.

It is found in the cytoplasm. The protein localises to the nucleus. In terms of biological role, component of LSM protein complexes, which are involved in RNA processing. Component of the cytoplasmic LSM1-LSM7 complex which is involved in mRNA degradation by promoting decapping and leading to accurate 5'-3' mRNA decay. The cytoplasmic LSM1-LSM7 complex regulates developmental gene expression by the decapping of specific development-related transcripts. Component of the nuclear LSM2-LSM8 complex which is involved splicing nuclear mRNAs. LSM2-LSM8 binds directly to the U6 small nuclear RNAs (snRNAs) and is essential for accurate splicing of selected development-related mRNAs through the stabilization of the spliceosomal U6 snRNA. Plays a critical role in the regulation of development-related gene expression. This chain is Sm-like protein LSM6A, found in Arabidopsis thaliana (Mouse-ear cress).